The sequence spans 617 residues: Dihydroxy-acid dehydratase (617 aa).

Residue D82 coordinates Mg(2+). C123 is a [2Fe-2S] cluster binding site. Mg(2+) is bound by residues D124 and K125. Residue K125 is modified to N6-carboxylysine. C197 serves as a coordination point for [2Fe-2S] cluster. E497 contributes to the Mg(2+) binding site. The active-site Proton acceptor is the S523.

It belongs to the IlvD/Edd family. Homodimer. Requires [2Fe-2S] cluster as cofactor. The cofactor is Mg(2+).

The enzyme catalyses (2R)-2,3-dihydroxy-3-methylbutanoate = 3-methyl-2-oxobutanoate + H2O. It catalyses the reaction (2R,3R)-2,3-dihydroxy-3-methylpentanoate = (S)-3-methyl-2-oxopentanoate + H2O. It functions in the pathway amino-acid biosynthesis; L-isoleucine biosynthesis; L-isoleucine from 2-oxobutanoate: step 3/4. It participates in amino-acid biosynthesis; L-valine biosynthesis; L-valine from pyruvate: step 3/4. Its function is as follows. Functions in the biosynthesis of branched-chain amino acids. Catalyzes the dehydration of (2R,3R)-2,3-dihydroxy-3-methylpentanoate (2,3-dihydroxy-3-methylvalerate) into 2-oxo-3-methylpentanoate (2-oxo-3-methylvalerate) and of (2R)-2,3-dihydroxy-3-methylbutanoate (2,3-dihydroxyisovalerate) into 2-oxo-3-methylbutanoate (2-oxoisovalerate), the penultimate precursor to L-isoleucine and L-valine, respectively. The polypeptide is Dihydroxy-acid dehydratase (Streptomyces coelicolor (strain ATCC BAA-471 / A3(2) / M145)).